We begin with the raw amino-acid sequence, 83 residues long: Cytochrome c oxidase subunit 12, mitochondrial (83 aa).

The region spanning 24–67 (TKHCWQSYVDYHKCVNMKGEDFAPCKVFWKTYNALCPLDWIEKW) is the CHCH domain. The short motif at 27 to 37 (CWQSYVDYHKC) is the Cx9C motif element. Cystine bridges form between cysteine 27/cysteine 59 and cysteine 37/cysteine 48. Positions 48–59 (CKVFWKTYNALC) match the Cx10C motif motif. The residue at position 82 (serine 82) is a Phosphoserine.

The protein belongs to the cytochrome c oxidase subunit 6B family. As to quaternary structure, component of the cytochrome c oxidase (complex IV, CIV), a multisubunit enzyme composed of 12 subunits. The complex is composed of a catalytic core of 3 subunits COX1, COX2 and COX3, encoded in the mitochondrial DNA, and 9 supernumerary subunits COX4, COX5A (or COX5B), COX6, COX7, COX8, COX9, COX12, COX13 and COX26, which are encoded in the nuclear genome. The complex exists as a monomer or a dimer and forms supercomplexes (SCs) in the inner mitochondrial membrane with a dimer of ubiquinol-cytochrome c oxidoreductase (cytochrome b-c1 complex, complex III, CIII), resulting in 2 different assemblies (supercomplexes III(2)IV and III(2)IV(2)).

It is found in the mitochondrion inner membrane. The protein operates within energy metabolism; oxidative phosphorylation. Functionally, component of the cytochrome c oxidase, the last enzyme in the mitochondrial electron transport chain which drives oxidative phosphorylation. The respiratory chain contains 3 multisubunit complexes succinate dehydrogenase (complex II, CII), ubiquinol-cytochrome c oxidoreductase (cytochrome b-c1 complex, complex III, CIII) and cytochrome c oxidase (complex IV, CIV), that cooperate to transfer electrons derived from NADH and succinate to molecular oxygen, creating an electrochemical gradient over the inner membrane that drives transmembrane transport and the ATP synthase. Cytochrome c oxidase is the component of the respiratory chain that catalyzes the reduction of oxygen to water. Electrons originating from reduced cytochrome c in the intermembrane space (IMS) are transferred via the dinuclear copper A center (CU(A)) of COX2 and heme A of COX1 to the active site in COX1, a binuclear center (BNC) formed by heme A3 and copper B (CU(B)). The BNC reduces molecular oxygen to 2 water molecules unsing 4 electrons from cytochrome c in the IMS and 4 protons from the mitochondrial matrix. The chain is Cytochrome c oxidase subunit 12, mitochondrial (COX12) from Saccharomyces cerevisiae (strain ATCC 204508 / S288c) (Baker's yeast).